A 290-amino-acid chain; its full sequence is Inactive tau-tubulin kinase ttbk-6 (290 aa).

Residues 1-240 (MEDHVLKKLN…FWQVMENEKI (240 aa)) form the Protein kinase domain. Disordered stretches follow at residues 244 to 263 (SKFD…AAWE) and 268 to 290 (RYFQ…DFVL).

It belongs to the protein kinase superfamily. CK1 Ser/Thr protein kinase family.

The protein is Inactive tau-tubulin kinase ttbk-6 of Caenorhabditis elegans.